The following is a 258-amino-acid chain: Spindlin-2A (258 aa).

The segment covering 1–23 (MKTPNAQEAEGQQTRAAAGRATG) has biased composition (low complexity). Residues 1–49 (MKTPNAQEAEGQQTRAAAGRATGSANMTKKKVSQKKQRGRPSSQPRRNI) form a disordered region. Residues 28–39 (TKKKVSQKKQRG) are compositionally biased toward basic residues. Tudor-like domain stretches follow at residues 50–99 (VGCR…LELH), 129–178 (IGKA…YQLL), and 210–255 (IGKH…YDLV). Histone H3K4me3 and H3R8me2a binding stretches follow at residues Glu138 and 246–248 (DFH).

Belongs to the SPIN/STSY family. As to quaternary structure, interacts with C11orf84/SPINDOC.

The protein localises to the nucleus. In terms of biological role, may be involved in the regulation of cell cycle progression. Exhibits H3K4me3-binding activity. In Homo sapiens (Human), this protein is Spindlin-2A (SPIN2A).